We begin with the raw amino-acid sequence, 175 residues long: Inorganic pyrophosphatase (175 aa).

Residues lysine 30, arginine 44, and tyrosine 56 each coordinate substrate. The Mg(2+) site is built by aspartate 66, aspartate 71, and aspartate 103. Tyrosine 140 lines the substrate pocket.

It belongs to the PPase family. As to quaternary structure, homohexamer. The cofactor is Mg(2+).

Its subcellular location is the cytoplasm. It carries out the reaction diphosphate + H2O = 2 phosphate + H(+). Catalyzes the hydrolysis of inorganic pyrophosphate (PPi) forming two phosphate ions. In Thermus thermophilus (strain ATCC 27634 / DSM 579 / HB8), this protein is Inorganic pyrophosphatase.